A 260-amino-acid chain; its full sequence is MKFAALALALLLAVGSHAASMQADAPSQLDHARAVLDVYLTQVKDMSLRAVNQLDDPQYAEFKTNLAQRIEEMYTQIKTLQGSVSPMTDSFYNTVMEVTKDTRESLNVDLEALKSSLAPQNEQLKQVIEKHLNDYRTLLTPIYNDYKTKHDEEMAALKTRLEPVMEELRTKIQANVEETKAVLMPMVETVRTKVTERLESLREVVQPYVQEYKEQMKQMYDQAQTVDTDALRTKITPLVEEIKVKMNAIFEIIAASVTKS.

Residues 1 to 18 (MKFAALALALLLAVGSHA) form the signal peptide. The 3 X approximate tandem repeats stretch occupies residues 32-63 (ARAVLDVYLTQVKDMSLRAVNQLDDPQYAEFK). A run of 2 repeats spans residues 64 to 85 (TNLA…GSVS) and 87 to 107 (MTDS…ESLN). The segment at 64–260 (TNLAQRIEEM…EIIAASVTKS (197 aa)) is 10 X approximate tandem repeats. The 3; half-length repeat unit spans residues 108 to 118 (VDLEALKSSLA). 5 consecutive repeat copies span residues 119 to 140 (PQNE…TLLT), 141 to 162 (PIYN…TRLE), 163 to 184 (PVME…AVLM), 185 to 206 (PMVE…EVVQ), and 207 to 225 (PYVQ…QAQT). Residues 226-236 (VDTDALRTKIT) form a 9; half-length repeat. Repeat 10 spans residues 237–260 (PLVEEIKVKMNAIFEIIAASVTKS).

The protein belongs to the apolipoprotein A1/A4/E family. As to expression, strong expression in liver with lower expression in intestine.

The protein resides in the secreted. Participates in the reverse transport of cholesterol from tissues to the liver for excretion by promoting cholesterol efflux from tissues and by acting as a cofactor for the lecithin cholesterol acyltransferase (LCAT). The polypeptide is Apolipoprotein A-I (apoa1) (Sparus aurata (Gilthead sea bream)).